A 469-amino-acid chain; its full sequence is Adenosylhomocysteinase (469 aa).

3 residues coordinate substrate: T63, D139, and E164. 165–167 is a binding site for NAD(+); it reads TTT. Residues K194 and D198 each contribute to the substrate site. NAD(+)-binding positions include N199, 228 to 233, E251, N300, 321 to 323, and N375; these read GYGDVG and IGH.

Belongs to the adenosylhomocysteinase family. The cofactor is NAD(+).

It is found in the cytoplasm. The catalysed reaction is S-adenosyl-L-homocysteine + H2O = L-homocysteine + adenosine. The protein operates within amino-acid biosynthesis; L-homocysteine biosynthesis; L-homocysteine from S-adenosyl-L-homocysteine: step 1/1. In terms of biological role, may play a key role in the regulation of the intracellular concentration of adenosylhomocysteine. The chain is Adenosylhomocysteinase from Pseudomonas putida (strain GB-1).